The primary structure comprises 23 residues: Septenin 2d (23 aa).

In terms of tissue distribution, expressed in skin glands.

It is found in the secreted. In terms of biological role, may act as an antimicrobial peptide. In Osteopilus septentrionalis (Cuban treefrog), this protein is Septenin 2d.